Consider the following 265-residue polypeptide: Undecaprenyl-diphosphatase (265 aa).

8 helical membrane passes run 1 to 21 (MDWF…FLPI), 39 to 59 (QGLA…MMYY), 83 to 103 (LKLG…GFLG), 114 to 134 (ALVI…SDAF), 144 to 164 (LGVA…IPGT), 188 to 208 (SFLL…KDLI), 218 to 238 (MMAL…VFFI), and 244 to 264 (VGML…LFWL).

The protein belongs to the UppP family.

The protein resides in the cell inner membrane. The catalysed reaction is di-trans,octa-cis-undecaprenyl diphosphate + H2O = di-trans,octa-cis-undecaprenyl phosphate + phosphate + H(+). Functionally, catalyzes the dephosphorylation of undecaprenyl diphosphate (UPP). Confers resistance to bacitracin. This chain is Undecaprenyl-diphosphatase, found in Alcanivorax borkumensis (strain ATCC 700651 / DSM 11573 / NCIMB 13689 / SK2).